The sequence spans 136 residues: Peptide methionine sulfoxide reductase B5 (136 aa).

Positions 14–135 (DEEWRAVLSP…NSVSIKFTPA (122 aa)) constitute a MsrB domain. Zn(2+) contacts are provided by C53, C56, C99, and C102. An intrachain disulfide couples C71 to C124. The active-site Nucleophile is the C124.

The protein belongs to the MsrB Met sulfoxide reductase family. Zn(2+) serves as cofactor.

The protein resides in the cytoplasm. The protein localises to the cytosol. The catalysed reaction is L-methionyl-[protein] + [thioredoxin]-disulfide + H2O = L-methionyl-(R)-S-oxide-[protein] + [thioredoxin]-dithiol. Functionally, catalyzes the reduction of methionine sulfoxide (MetSO) to methionine in proteins. Plays a protective role against oxidative stress by restoring activity to proteins that have been inactivated by methionine oxidation. MSRB family specifically reduces the MetSO R-enantiomer. The protein is Peptide methionine sulfoxide reductase B5 (MSRB5) of Oryza sativa subsp. japonica (Rice).